Here is a 451-residue protein sequence, read N- to C-terminus: uncharacterized protein (451 aa).

To ORF5 in pFZ1.

This is an uncharacterized protein from Methanothermobacter thermautotrophicus (Methanobacterium thermoformicicum).